The following is a 293-amino-acid chain: Tyrosine recombinase XerD (293 aa).

The Core-binding (CB) domain maps to 1–83 (MHGLIADFIH…ALRKFYRFLL (83 aa)). Positions 104–287 (HLPATLSGTE…SNQHLVAVYH (184 aa)) constitute a Tyr recombinase domain. Active-site residues include Arg-144, Lys-168, His-239, Arg-242, and His-265. Tyr-274 acts as the O-(3'-phospho-DNA)-tyrosine intermediate in catalysis.

The protein belongs to the 'phage' integrase family. XerD subfamily. In terms of assembly, forms a cyclic heterotetrameric complex composed of two molecules of XerC and two molecules of XerD.

The protein resides in the cytoplasm. Site-specific tyrosine recombinase, which acts by catalyzing the cutting and rejoining of the recombining DNA molecules. The XerC-XerD complex is essential to convert dimers of the bacterial chromosome into monomers to permit their segregation at cell division. It also contributes to the segregational stability of plasmids. This is Tyrosine recombinase XerD from Lacticaseibacillus casei (Lactobacillus casei).